Here is a 450-residue protein sequence, read N- to C-terminus: Plasminogen-binding protein PgbA (450 aa).

Composition is skewed to basic and acidic residues over residues 262–273 (EIKQEAIKEPKK), 284–310 (LEEK…DERK), and 317–362 (KAME…REIN). Residues 262-450 (EIKQEAIKEP…RRKALEMNKK (189 aa)) are disordered. Residues 363–386 (QESANEPSSENNATLKDTENTSVL) show a composition bias toward polar residues. Over residues 389–450 (SAAKKEAPKP…RRKALEMNKK (62 aa)) the composition is skewed to basic and acidic residues.

The protein resides in the cell surface. In terms of biological role, binds plasminogen, specifically, and in a concentration and lysine-dependent manner. Plasminogen is the precursor of plasmin, a serine protease that cleaves fibrin, fibronectin, laminin and vitronectin. Acquisition of plasminogen/plasmin could enable H.pylori to degrade host components. This is Plasminogen-binding protein PgbA (pgbA) from Helicobacter pylori (strain J99 / ATCC 700824) (Campylobacter pylori J99).